A 251-amino-acid polypeptide reads, in one-letter code: Coproheme decarboxylase (251 aa).

Residues R133, 147–151 (YPMSK), H174, Q187, and S225 each bind Fe-coproporphyrin III. Y147 is an active-site residue.

Belongs to the ChdC family. Type 1 subfamily. Requires Fe-coproporphyrin III as cofactor.

The catalysed reaction is Fe-coproporphyrin III + 2 H2O2 + 2 H(+) = heme b + 2 CO2 + 4 H2O. It carries out the reaction Fe-coproporphyrin III + H2O2 + H(+) = harderoheme III + CO2 + 2 H2O. It catalyses the reaction harderoheme III + H2O2 + H(+) = heme b + CO2 + 2 H2O. It functions in the pathway porphyrin-containing compound metabolism; protoheme biosynthesis. Functionally, involved in coproporphyrin-dependent heme b biosynthesis. Catalyzes the decarboxylation of Fe-coproporphyrin III (coproheme) to heme b (protoheme IX), the last step of the pathway. The reaction occurs in a stepwise manner with a three-propionate intermediate. The chain is Coproheme decarboxylase from Listeria monocytogenes serotype 4b (strain CLIP80459).